Reading from the N-terminus, the 346-residue chain is Protein pelota homolog (346 aa).

Belongs to the eukaryotic release factor 1 family. Pelota subfamily. In terms of assembly, monomer. A divalent metal cation is required as a cofactor.

Its subcellular location is the cytoplasm. In terms of biological role, may function in recognizing stalled ribosomes, interact with stem-loop structures in stalled mRNA molecules, and effect endonucleolytic cleavage of the mRNA. May play a role in the release non-functional ribosomes and degradation of damaged mRNAs. Has endoribonuclease activity. The polypeptide is Protein pelota homolog (Ignicoccus hospitalis (strain KIN4/I / DSM 18386 / JCM 14125)).